The primary structure comprises 218 residues: Protein N-lysine methyltransferase METTL21A (218 aa).

Residues tryptophan 47, 73-75 (GAG), aspartate 94, tryptophan 125, and alanine 143 contribute to the S-adenosyl-L-methionine site.

Belongs to the methyltransferase superfamily. METTL21 family. In terms of assembly, interacts with heat shock 70 family members; at least some of these proteins are methylation substrates.

It is found in the cytoplasm. It catalyses the reaction L-lysyl-[protein] + 3 S-adenosyl-L-methionine = N(6),N(6),N(6)-trimethyl-L-lysyl-[protein] + 3 S-adenosyl-L-homocysteine + 3 H(+). In terms of biological role, protein-lysine methyltransferase that selectively trimethylates residues in heat shock protein 70 (HSP70) family members. Contributes to the in vivo trimethylation of Lys residues in HSPA1 and HSPA8. In vitro methylates 'Lys-561' in HSPA1, 'Lys-564' in HSPA2, 'Lys-585' in HSPA5, 'Lys-563' in HSPA6 and 'Lys-561' in HSPA8. The polypeptide is Protein N-lysine methyltransferase METTL21A (METTL21A) (Bos taurus (Bovine)).